Here is a 988-residue protein sequence, read N- to C-terminus: Exportin-T (988 aa).

This sequence belongs to the exportin family.

It localises to the nucleus. It is found in the cytoplasm. Functionally, tRNA nucleus export receptor which facilitates tRNA translocation across the nuclear pore complex. Involved in pre-tRNA splicing, probably by affecting the interaction of pre-tRNA with splicing endonuclease. This is Exportin-T (LOS1) from Lodderomyces elongisporus (strain ATCC 11503 / CBS 2605 / JCM 1781 / NBRC 1676 / NRRL YB-4239) (Yeast).